A 164-amino-acid chain; its full sequence is NADH-quinone oxidoreductase subunit I (164 aa).

2 4Fe-4S ferredoxin-type domains span residues 55–84 and 95–124; these read RRYE…IEID and KVYD…MGPY. 8 residues coordinate [4Fe-4S] cluster: C64, C67, C70, C74, C104, C107, C110, and C114.

The protein belongs to the complex I 23 kDa subunit family. As to quaternary structure, NDH-1 is composed of 14 different subunits. Subunits NuoA, H, J, K, L, M, N constitute the membrane sector of the complex. [4Fe-4S] cluster is required as a cofactor.

It localises to the cell inner membrane. The catalysed reaction is a quinone + NADH + 5 H(+)(in) = a quinol + NAD(+) + 4 H(+)(out). In terms of biological role, NDH-1 shuttles electrons from NADH, via FMN and iron-sulfur (Fe-S) centers, to quinones in the respiratory chain. The immediate electron acceptor for the enzyme in this species is believed to be ubiquinone. Couples the redox reaction to proton translocation (for every two electrons transferred, four hydrogen ions are translocated across the cytoplasmic membrane), and thus conserves the redox energy in a proton gradient. This chain is NADH-quinone oxidoreductase subunit I, found in Magnetococcus marinus (strain ATCC BAA-1437 / JCM 17883 / MC-1).